The sequence spans 442 residues: Shufflon protein B (442 aa).

The segment at 1–361 (MKKYDRGWAS…TGAILSCQSG (361 aa)) is constant region. Residues 362-442 (TWKSSSASIW…SYFMKITCLK (81 aa)) form a variable region region.

In Escherichia coli, this protein is Shufflon protein B.